Reading from the N-terminus, the 573-residue chain is Proline--tRNA ligase (573 aa).

It belongs to the class-II aminoacyl-tRNA synthetase family. ProS type 1 subfamily. Homodimer.

It is found in the cytoplasm. The enzyme catalyses tRNA(Pro) + L-proline + ATP = L-prolyl-tRNA(Pro) + AMP + diphosphate. Its function is as follows. Catalyzes the attachment of proline to tRNA(Pro) in a two-step reaction: proline is first activated by ATP to form Pro-AMP and then transferred to the acceptor end of tRNA(Pro). As ProRS can inadvertently accommodate and process non-cognate amino acids such as alanine and cysteine, to avoid such errors it has two additional distinct editing activities against alanine. One activity is designated as 'pretransfer' editing and involves the tRNA(Pro)-independent hydrolysis of activated Ala-AMP. The other activity is designated 'posttransfer' editing and involves deacylation of mischarged Ala-tRNA(Pro). The misacylated Cys-tRNA(Pro) is not edited by ProRS. This chain is Proline--tRNA ligase, found in Cupriavidus taiwanensis (strain DSM 17343 / BCRC 17206 / CCUG 44338 / CIP 107171 / LMG 19424 / R1) (Ralstonia taiwanensis (strain LMG 19424)).